The following is a 666-amino-acid chain: DNA mismatch repair protein MutL (666 aa).

This sequence belongs to the DNA mismatch repair MutL/HexB family.

Its function is as follows. This protein is involved in the repair of mismatches in DNA. It is required for dam-dependent methyl-directed DNA mismatch repair. May act as a 'molecular matchmaker', a protein that promotes the formation of a stable complex between two or more DNA-binding proteins in an ATP-dependent manner without itself being part of a final effector complex. In Clostridium botulinum (strain 657 / Type Ba4), this protein is DNA mismatch repair protein MutL.